We begin with the raw amino-acid sequence, 396 residues long: MAEKEHYERTKPHVNIGTIGHVDHGKTTLTAAITKVLAAKGLAKAEDYADIDAAPEEKERGITINTAHVEYETEKRHYAHIDAPGHADYVKNMITGAAQMDGAILVVAATDGPMPQTREHILLARQVGVQYIVVFLNKTDLVDDDELVDLVEMEVRDLLSEYDFPGDDVPVVRGSALKALEGDPEQEKVILHLMDVIDDYIPTPKRPTDKPFMMPVEDVFTITGRGTVASGRIDRGTVKVGDEVEIVGLTEDVLKSTVTGLEMFHKTLDLGEAGDNVGVLLRGISHDQIQRGQVLAEPGSIQTHKNFKGEVYVMTKEEGGRHTPFFSNYRPQFYFHTTDVTGTIELPDGVEMVMPGDNVTFTVNLQKPVALEKGLKFTIREGGHTVGAGVVSDILD.

The 195-residue stretch at 11-205 (KPHVNIGTIG…VIDDYIPTPK (195 aa)) folds into the tr-type G domain. A G1 region spans residues 20-27 (GHVDHGKT). 20 to 27 (GHVDHGKT) is a binding site for GTP. Mg(2+) is bound at residue T27. The G2 stretch occupies residues 61–65 (GITIN). A G3 region spans residues 82-85 (DAPG). Residues 82 to 86 (DAPGH) and 137 to 140 (NKTD) contribute to the GTP site. A G4 region spans residues 137–140 (NKTD). A G5 region spans residues 175–177 (SAL).

The protein belongs to the TRAFAC class translation factor GTPase superfamily. Classic translation factor GTPase family. EF-Tu/EF-1A subfamily. As to quaternary structure, monomer.

It is found in the cytoplasm. It carries out the reaction GTP + H2O = GDP + phosphate + H(+). Functionally, GTP hydrolase that promotes the GTP-dependent binding of aminoacyl-tRNA to the A-site of ribosomes during protein biosynthesis. This Limosilactobacillus reuteri (strain DSM 20016) (Lactobacillus reuteri) protein is Elongation factor Tu.